Here is a 631-residue protein sequence, read N- to C-terminus: MDHDYEKLGLKVGLEIHQQLNTKRKLFCNCPTKIRDDEPHGEIERVLRPSQSEMGHVDKAALLESKKEKKFIYQYYNDSTCLVELDDEPPHDVSPEAVDTALEVSTLMNMKMADEVQIMRKMVIDGSNTSGFQRTMFVSQEGFIETEYGNIGVTSLCLEEDACKKIEDGKDYTKYCVDRLGIPLLEITTEPDITSPKMGKEAARRIGTILRATGKVKRGLGTIRQDVNISIREGARIEVKGVQNLDLIEKIIENEVTRQISLNEIKEELLKRNAEVVDEIKDITELLKDTESKVLKSALKNKGVIRAILLKGFSGMIGREVQPGRRLGTEFSDRGKVLGGVGGLFHTDELPKYGITEEEVTKLKEYMNCGENDAVILVADKKNKVERALNAVIERAKESMIGIPEETRKALDDGNTSYLRPLPGAARMYPETDVPTITITEEKLEAIRNNLPEMPEEKLVRFVKEYELNEDLAKQMVMSYHVDLFESLSKKYSKIKPTLIATTLEATLKEIKREGLDTDLLTEEHLEELFKGLSEDKMSKEAVPDVIKGFIENPSKKLDEILEIKGMSSMSVDEVESIIEDIINQNISQVNEKGMGAMGLLMGRCMAQLRGKADGKLINTTLQKKLKEKVQ.

The protein belongs to the GatB/GatE family. GatE subfamily. As to quaternary structure, heterodimer of GatD and GatE.

The enzyme catalyses L-glutamyl-tRNA(Gln) + L-glutamine + ATP + H2O = L-glutaminyl-tRNA(Gln) + L-glutamate + ADP + phosphate + H(+). Functionally, allows the formation of correctly charged Gln-tRNA(Gln) through the transamidation of misacylated Glu-tRNA(Gln) in organisms which lack glutaminyl-tRNA synthetase. The reaction takes place in the presence of glutamine and ATP through an activated gamma-phospho-Glu-tRNA(Gln). The GatDE system is specific for glutamate and does not act on aspartate. This is Glutamyl-tRNA(Gln) amidotransferase subunit E from Methanococcus maripaludis (strain C5 / ATCC BAA-1333).